Consider the following 2209-residue polypeptide: Orsellinic acid synthase armB (2209 aa).

Residues 38–261 form an N-terminal acylcarrier protein transacylase domain (SAT) region; that stretch reads LLLDACYYAF…HKTTVDALYH (224 aa). A Ketosynthase family 3 (KS3) domain is found at 391–817; that stretch reads QEPIAICGMS…GSNGALLLEE (427 aa). Catalysis depends on for beta-ketoacyl synthase activity residues cysteine 561, histidine 696, and histidine 736. Residues 914–1239 are malonyl-CoA:ACP transacylase (MAT) domain; that stretch reads VFVFSGQGGQ…NLTLSSSLSQ (326 aa). The For acyl/malonyl transferase activity role is filled by serine 1008. The N-terminal hotdog fold stretch occupies residues 1306 to 1436; the sequence is MLQSWAQFPS…GQFRPLLVAD (131 aa). The region spanning 1306–1613 is the PKS/mFAS DH domain; the sequence is MLQSWAQFPS…FKKLRLNTLQ (308 aa). The tract at residues 1335-1610 is product template (PT) domain; sequence ITGHIVGDVP…GMCFKKLRLN (276 aa). Histidine 1338 serves as the catalytic Proton acceptor; for dehydratase activity. The segment at 1463 to 1613 is C-terminal hotdog fold; sequence AEVITTRTAY…FKKLRLNTLQ (151 aa). Aspartate 1524 (proton donor; for dehydratase activity) is an active-site residue. Carrier domains are found at residues 1659 to 1734 and 1844 to 1921; these read VDVQ…SSTI and SSSS…SSKQ. O-(pantetheine 4'-phosphoryl)serine is present on residues serine 1693 and serine 1881. Residues 1917–1945 are disordered; sequence ISSKQPGKSPKPSEEATMDPDKEEDLSDL. A compositionally biased stretch (acidic residues) spans 1932–1943; it reads ATMDPDKEEDLS. The segment at 1962-2201 is thioesterase (TE) domain; it reads VPMSVQKSSS…LGAVTQALVD (240 aa).

It catalyses the reaction 3 malonyl-CoA + acetyl-CoA + 2 H(+) = orsellinate + 3 CO2 + 4 CoA. Its pathway is secondary metabolite biosynthesis. Functionally, non-reducing polyketide synthase, part of the gene cluster that mediates the biosynthesis of melleolides, a range of antifungal and phytotoxic polyketide derivatives composed of an orsellinic acid (OA) moiety esterified to various sesquiterpene alcohols. The first step in melleolides biosynthesis is performed by the delta(6)-protoilludene synthase PRO1 which catalyzes the cyclization of farnesyl diphosphate to protoilludene. The orsellinic acid synthase armB produces OA by condensing acetyl-CoA with 3 malonyl-CoA units in a three-round chain elongation reaction folowed by a C2-C7 ring closure. ArmB further catalyzes the trans-esterification of OA to the various sesquiterpene alcohols resulting from the hydroxylation of protoilludene. The melleolides cluster also includes 5 cytochrome P450 monooxygenases, 4 NAD(+)-dependent oxidoreductases, one flavin-dependent oxidoreductase, and one O-methyltransferase. The cytochrome P450 monooxygenases may be involved in protoilludene hydroxylation to elaborate melleolides with multiple alcohol groups, such as melleolide D, which carries alcohol functionalities at C-4, C-5, C-10, and C-13. The role of the NAD(+)-dependent enzymes remains unknown. Numerous melleolides, including arnamial, show 5'-O-methylation of the aromatic moiety which may be catalyzed by the methyltransferase encoded in the cluster. The flavin-dependent oxidoreductase might represent the dehydrogenase yielding the aldehyde in position 1 of arnamial and other melleolides. Finally, several halogenase localized outside of the cluster (armH1 to armH5), are able to catalyze the transfer of a single chlorine atom to the melleolide backbone, resulting in a 6'-chloromelleolide product. The chain is Orsellinic acid synthase armB from Armillaria mellea (Honey mushroom).